The sequence spans 623 residues: Sterol O-acyltransferase 1 (623 aa).

Positions 20–99 are disordered; it reads NSAEPSKRHS…EQAEEKYPVD (80 aa). A compositionally biased stretch (low complexity) spans 57–72; that stretch reads ATTTATGVAVAAAAAA. The segment covering 83 to 92 has biased composition (acidic residues); sequence DGDDEQDEQA. 5 consecutive transmembrane segments (helical) span residues 195–215, 242–262, 277–297, 384–404, and 422–442; these read LESN…WIAF, LFTI…VVFV, GFVA…PVYV, ISCS…QINY, and IMGT…PVAM. The short motif at 504–510 is the FYXDWWN motif element; sequence FYGDWWN. A run of 2 helical transmembrane segments spans residues 548 to 568 and 603 to 623; these read ATLF…FAIF and VVFT…YLTL. Histidine 560 is a catalytic residue.

It belongs to the membrane-bound acyltransferase family. Sterol o-acyltransferase subfamily.

The protein resides in the endoplasmic reticulum membrane. Functionally, sterol O-acyltransferase that catalyzes the formation of stery esters. This Saccharomyces uvarum (strain ATCC 76518 / CBS 7001 / CLIB 283 / NBRC 10550 / MCYC 623 / NCYC 2669 / NRRL Y-11845) (Yeast) protein is Sterol O-acyltransferase 1 (ARE1).